A 453-amino-acid polypeptide reads, in one-letter code: MAPQTQSLVFKVRRNPQELVTPAKPTPKEFKLLSDIDDQTSLRSLTPLVTIYRNNPSMEGKDPVEIIREALSKTLVFYYPFAGRLRNGPNGKLMVDCTGEGVIFIEADADVTLDQFGIDLHPPFPCFDQLLYDVPGSDGILDSPLLLIQVTRLKCGGFIFAVRLNHAMCDAIGMSQFMKGLAEIARGEPKPFILPVWHRELLCARNPPKVTFIHNEYQKPPHDNNNNNFILQHSSFFFGPNELDAIRRLLPYHHSKSTTSDILTAFLWRCRTLALQPENPNHEFRLLYILNARYGRCSFNPPLPEGFYGNAFVSPAAISTGEKLCNNPLEYALELMKEAKSKGTEEYVHSVADLMVIKGRPSYFYNDVGYLEVSDLTKARFRDVDFGWGKAVYGGATQGYFSSILYVSYTNSKGVEGIMALTSLPTKAMERFEKELDDLFKTKDKSQILRSHI.

Residues His166 and Asp385 each act as proton acceptor in the active site.

It belongs to the plant acyltransferase family. In terms of assembly, monomer. Expressed in roots and hypocotyls. Detected in seeds, leaves and cotyledons, but not in young developing leaves.

The enzyme catalyses 13-hydroxylupanine + (2E)-2-methylbut-2-enoyl-CoA = 13-(2-methylcrotonoyloxy)lupanine + CoA. With respect to regulation, inhibited by N-ethylmaleimide, p-chloromercuribenzoic acid and diethylpyrocarbonate (DEPC). Functionally, acyl-CoA-dependent acyltransferase involved in the synthesis of lupanine alkaloids. Can use both (-)-13alpha-hydroxymultiflorine and (+)-13alpha-hydroxylupanine as substrates. Lower activity with (-)-3beta, 13alpha-dihydroxylupanine, but no activity with (+)-epilupinine and (-)-lupinine as substrates. Tigloyl-CoA, benzoyl-CoA and, more slowly, acetyl-CoA, propionyl-CoA and 2-butenoyl-CoA can act as acyl donors. In Lupinus albus (White lupine), this protein is 13-hydroxylupanine O-tigloyltransferase (HMT/HLT).